Here is a 405-residue protein sequence, read N- to C-terminus: CMP-sialic acid transporter 5 (405 aa).

Residues 1 to 43 lie on the Cytoplasmic side of the membrane; the sequence is MQRNGVVECSVCRSRLVVPSPRSVSRAYDKHRSKISSKFRALN. A helical transmembrane segment spans residues 44–64; the sequence is VLLVVGDCILVGLQPILVFMS. Residues 65–74 are Lumenal-facing; it reads KVDGKFQFSP. A helical transmembrane segment spans residues 75 to 95; it reads ISVNFLTEVTKVVFAIVMLII. The Cytoplasmic segment spans residues 96–121; that stretch reads QSRKQKVGEKPLLARSTFIQAARNNA. A helical transmembrane segment spans residues 122–142; the sequence is LLAVPALLYAINNYLKFIMQL. Residues 143 to 147 lie on the Lumenal side of the membrane; it reads YFNPS. A helical membrane pass occupies residues 148 to 168; that stretch reads TVKMLSNLKVLVIAVLLKFIM. Topologically, residues 169 to 171 are cytoplasmic; it reads KRR. A helical membrane pass occupies residues 172 to 192; it reads FSVIQWEALALLLIGISINQL. The Lumenal portion of the chain corresponds to 193 to 200; that stretch reads RTVPAGNT. A helical transmembrane segment spans residues 201-221; that stretch reads AFGLPVTAIAYIYTLIFVTVP. Residues 222 to 244 are Cytoplasmic-facing; that stretch reads SLASVYNEYALKSQYDTSIYLQN. A helical transmembrane segment spans residues 245 to 265; the sequence is LFLYGYGAIFNFLGILGTALF. Over 266–281 the chain is Lumenal; that stretch reads QGPESFNILRGHSRAT. The helical transmembrane segment at 282–302 threads the bilayer; that stretch reads MFLICNNAAQGILSSFFFKYA. Residues 303 to 322 lie on the Cytoplasmic side of the membrane; that stretch reads DTILKKYSSTVATIFTGLAS. A helical transmembrane segment spans residues 323–343; that stretch reads AAFLGHTLTINFLLGISVVFI. The Lumenal portion of the chain corresponds to 344 to 405; the sequence is SMHQFFSPLA…TDERQPLLPT (62 aa). The disordered stretch occupies residues 368–405; sequence DTQNHRSSESSFVNMTAGAAEDASHRIGTDERQPLLPT. Residues 389–405 show a composition bias toward basic and acidic residues; the sequence is DASHRIGTDERQPLLPT.

Belongs to the nucleotide-sugar transporter family. CMP-Sialate:CMP antiporter (TC 2.A.7.12) subfamily.

Its subcellular location is the golgi apparatus membrane. Functionally, sugar transporter involved in the transport of CMP-sialic acid from the cytoplasm into the Golgi. May transport important nucleotide sugars such as CMP-Kdo (2-keto-3-deoxy-D-manno-octulosonic acid) in physiological conditions. In Oryza sativa subsp. japonica (Rice), this protein is CMP-sialic acid transporter 5.